The following is a 329-amino-acid chain: Endonuclease 8-like 2 (329 aa).

Proline 2 serves as the catalytic Schiff-base intermediate with DNA. Glutamate 3 serves as the catalytic Proton donor. Lysine 50 (proton donor; for beta-elimination activity) is an active-site residue. An N6-acetyllysine modification is found at lysine 50. Serine 68 bears the Phosphoserine mark. Residues 88-112 form a disordered region; that stretch reads GPSAQEPSAGPSGSGEPVPSRSAET. At lysine 150 the chain carries N6-acetyllysine. Asparagine 227 serves as a coordination point for DNA. An FPG-type zinc finger spans residues 280–316; it reads QIYQKEQCPSGHQVMKETFGPPDGLQRLTWWCPQCQP. Residue arginine 306 is the Proton donor; for delta-elimination activity of the active site.

It belongs to the FPG family. In terms of assembly, binds EP300.

It localises to the nucleus. The catalysed reaction is 2'-deoxyribonucleotide-(2'-deoxyribose 5'-phosphate)-2'-deoxyribonucleotide-DNA = a 3'-end 2'-deoxyribonucleotide-(2,3-dehydro-2,3-deoxyribose 5'-phosphate)-DNA + a 5'-end 5'-phospho-2'-deoxyribonucleoside-DNA + H(+). Its activity is regulated as follows. Acetylation of Lys-50 leads to loss of DNA nicking activity. Involved in base excision repair of DNA damaged by oxidation or by mutagenic agents. Has DNA glycosylase activity towards 5-hydroxyuracil and other oxidized derivatives of cytosine with a preference for mismatched double-stranded DNA (DNA bubbles). Has low or no DNA glycosylase activity towards thymine glycol, 2-hydroxyadenine, hypoxanthine and 8-oxoguanine. Has AP (apurinic/apyrimidinic) lyase activity and introduces nicks in the DNA strand. Cleaves the DNA backbone by beta-delta elimination to generate a single-strand break at the site of the removed base with both 3'- and 5'-phosphates. The chain is Endonuclease 8-like 2 (Neil2) from Mus musculus (Mouse).